We begin with the raw amino-acid sequence, 397 residues long: DNA-directed RNA polymerase subunit Rpo1C (397 aa).

Belongs to the RNA polymerase beta' chain family. As to quaternary structure, part of the RNA polymerase complex.

The protein resides in the cytoplasm. The catalysed reaction is RNA(n) + a ribonucleoside 5'-triphosphate = RNA(n+1) + diphosphate. Its function is as follows. DNA-dependent RNA polymerase (RNAP) catalyzes the transcription of DNA into RNA using the four ribonucleoside triphosphates as substrates. Forms part of the jaw domain. This is DNA-directed RNA polymerase subunit Rpo1C from Halobacterium salinarum (strain ATCC 29341 / DSM 671 / R1).